We begin with the raw amino-acid sequence, 91 residues long: MTEQKNKTSLIEFPCTFPLKVMGAVHPEFEQAVLDTVRLHAPDTQAHHITTRPSSKGNYTGATVQVKVENQEQLDNIYRALTSHELVKVVL.

The protein belongs to the UPF0250 family.

The protein is UPF0250 protein NMA1380 of Neisseria meningitidis serogroup A / serotype 4A (strain DSM 15465 / Z2491).